The primary structure comprises 747 residues: Sulfhydryl oxidase 1 (747 aa).

A signal peptide spans 1-29 (MRRCNSGSGPPPSLLLLLLWLLAVPGANA). The region spanning 36-156 (YSPSDPLTLL…RERLIDALES (121 aa)) is the Thioredoxin domain. Catalysis depends on nucleophile residues C70 and C73. 2 cysteine pairs are disulfide-bonded: C70/C73 and C101/C110. A glycan (N-linked (GlcNAc...) (complex) asparagine) is linked at N130. N243 is a glycosylation site (N-linked (GlcNAc...) asparagine). C393 and C405 are joined by a disulfide. The 108-residue stretch at 396-503 (SEPHFRGFPC…EDPQFPKVQW (108 aa)) folds into the ERV/ALR sulfhydryl oxidase domain. R401, W408, and H412 together coordinate FAD. S426 carries the post-translational modification Phosphoserine; by FAM20C. The cysteines at positions 449 and 452 are disulfide-linked. Residues D451, H455, 478-485 (WSSHNRVN), K500, and W503 contribute to the FAD site. C509 and C512 are disulfide-bonded. A disordered region spans residues 573–633 (SRNSTLDPGK…HMAELQRNEQ (61 aa)). N-linked (GlcNAc...) asparagine glycosylation is present at N575. The span at 621–633 (PPEHMAELQRNEQ) shows a compositional bias: basic and acidic residues. A helical membrane pass occupies residues 710–730 (ISLCVGLYSLSFMGLLAMYTY).

Belongs to the quiescin-sulfhydryl oxidase (QSOX) family. In terms of assembly, monomer. FAD serves as cofactor. Post-translationally, N-glycosylated. O-glycosylated on Thr and Ser residues. In terms of tissue distribution, expressed in heart, placenta, lung, liver, skeletal muscle, pancreas and very weakly in brain and kidney.

The protein localises to the golgi apparatus membrane. It is found in the secreted. The catalysed reaction is 2 R'C(R)SH + O2 = R'C(R)S-S(R)CR' + H2O2. In terms of biological role, catalyzes the oxidation of sulfhydryl groups in peptide and protein thiols to disulfides with the reduction of oxygen to hydrogen peroxide. Plays a role in disulfide bond formation in a variety of extracellular proteins. In fibroblasts, required for normal incorporation of laminin into the extracellular matrix, and thereby for normal cell-cell adhesion and cell migration. The polypeptide is Sulfhydryl oxidase 1 (QSOX1) (Homo sapiens (Human)).